Here is a 451-residue protein sequence, read N- to C-terminus: MLDINLFREEKGNNPEIIRESQRRRFASVEIVDEIIKLDKEWRQRQFEVDSFRKEFNKLNKQVAQLKIKKEDASEIIQQTEKNKQDSTAKEAEVREAYAALKAKLEQVGNLVHDSVPVDKDEANNLVIKLWGEKRFSTPGLKLKNHVDLVELLGIADTKRGAEIAGARGFFLKGDGLMLNQALINFGLTFLKKRGFTGLQPPFFMRKDVMAKCAQLAQFDEELYKVTGEGDDKYLIATAEQPLCAYHIDEWIHPTELPLRYAGYSSCFRKEAGSHGRDTLGIFRVHQFEKIEQFCITGPNENASWEMLDEMMKNSEDFYQALKLPYQIVSIVSGALNDAAAKKYDLEAWFPSSETFRELVSCSNCTDYQARRLEIRYGQKKSNEQTKQYVHMLNSTLTATERTICCILENYQREDGVDIPEVLQPFMGGETFLPFKAKPVVADTKGKKSKA.

The cysteines at positions 213 and 244 are disulfide-linked. 238 to 240 (TAE) contacts L-serine. ATP-binding positions include 269-271 (RKE) and Val-285. Glu-292 contributes to the L-serine binding site. 358 to 361 (ELVS) contributes to the ATP binding site. An L-serine-binding site is contributed by Thr-396.

This sequence belongs to the class-II aminoacyl-tRNA synthetase family. Type-1 seryl-tRNA synthetase subfamily. As to quaternary structure, homodimer. The tRNA molecule binds across the dimer.

The protein localises to the cytoplasm. Its subcellular location is the cytosol. It catalyses the reaction tRNA(Ser) + L-serine + ATP = L-seryl-tRNA(Ser) + AMP + diphosphate + H(+). In terms of biological role, catalyzes the attachment of serine to tRNA(Ser) in a two-step reaction: serine is first activated by ATP to form Ser-AMP and then transferred to the acceptor end of tRNA(Ser). This Arabidopsis thaliana (Mouse-ear cress) protein is Serine--tRNA ligase, cytoplasmic.